Consider the following 331-residue polypeptide: Ketol-acid reductoisomerase (NADP(+)) (331 aa).

Residues 2-182 (AQLFYDTDAD…GGTRAGILET (181 aa)) enclose the KARI N-terminal Rossmann domain. NADP(+) is bound by residues 25-28 (YGSQ), Ser51, Ser53, and 83-86 (DEFQ). Residue His108 is part of the active site. Position 134 (Gly134) interacts with NADP(+). Positions 183 to 328 (NFKEETETDL…KGLRSMFSWL (146 aa)) constitute a KARI C-terminal knotted domain. Residues Asp191, Glu195, Glu227, and Glu231 each coordinate Mg(2+). Ser252 is a substrate binding site.

It belongs to the ketol-acid reductoisomerase family. The cofactor is Mg(2+).

It catalyses the reaction (2R)-2,3-dihydroxy-3-methylbutanoate + NADP(+) = (2S)-2-acetolactate + NADPH + H(+). The enzyme catalyses (2R,3R)-2,3-dihydroxy-3-methylpentanoate + NADP(+) = (S)-2-ethyl-2-hydroxy-3-oxobutanoate + NADPH + H(+). It participates in amino-acid biosynthesis; L-isoleucine biosynthesis; L-isoleucine from 2-oxobutanoate: step 2/4. The protein operates within amino-acid biosynthesis; L-valine biosynthesis; L-valine from pyruvate: step 2/4. Involved in the biosynthesis of branched-chain amino acids (BCAA). Catalyzes an alkyl-migration followed by a ketol-acid reduction of (S)-2-acetolactate (S2AL) to yield (R)-2,3-dihydroxy-isovalerate. In the isomerase reaction, S2AL is rearranged via a Mg-dependent methyl migration to produce 3-hydroxy-3-methyl-2-ketobutyrate (HMKB). In the reductase reaction, this 2-ketoacid undergoes a metal-dependent reduction by NADPH to yield (R)-2,3-dihydroxy-isovalerate. In Synechococcus sp. (strain WH7803), this protein is Ketol-acid reductoisomerase (NADP(+)).